Consider the following 255-residue polypeptide: Flagellar brake protein YcgR (255 aa).

A PilZ domain is found at 122–240; sequence QRRTYFRINT…ERDLQQVIFE (119 aa).

The protein belongs to the YcgR family. Monomer. Interacts with the flagellar basal bodies.

It localises to the bacterial flagellum basal body. Acts as a flagellar brake, regulating swimming and swarming in a bis-(3'-5') cyclic diguanylic acid (c-di-GMP)-dependent manner. Binds 1 c-di-GMP dimer per subunit. Increasing levels of c-di-GMP lead to decreased motility. The polypeptide is Flagellar brake protein YcgR (Pectobacterium carotovorum subsp. carotovorum (strain PC1)).